The following is a 236-amino-acid chain: Mitochondrial coenzyme A diphosphatase NUDT8 (236 aa).

Positions 25-172 (LRARPASAAV…HFRYTLPVFL (148 aa)) constitute a Nudix hydrolase domain. N6-succinyllysine is present on Lys-70. The Nudix box signature appears at 70-91 (KCDPADQDVVHTALRETREELG). 2 residues coordinate Mg(2+): Glu-85 and Glu-89.

This sequence belongs to the Nudix hydrolase family. In terms of assembly, monomer. It depends on Mg(2+) as a cofactor. Requires Mn(2+) as cofactor.

The protein localises to the mitochondrion. It carries out the reaction an acyl-CoA + H2O = an acyl-4'-phosphopantetheine + adenosine 3',5'-bisphosphate + 2 H(+). It catalyses the reaction CoA + H2O = (R)-4'-phosphopantetheine + adenosine 3',5'-bisphosphate + 2 H(+). The enzyme catalyses acetyl-CoA + H2O = S-acetyl-4'-phosphopantetheine + adenosine 3',5'-bisphosphate + 2 H(+). The catalysed reaction is butanoyl-CoA + H2O = S-butanoyl-4'-phosphopantetheine + adenosine 3',5'-bisphosphate + 2 H(+). It carries out the reaction hexanoyl-CoA + H2O = hexanoyl-4'-phosphopantetheine + adenosine 3',5'-bisphosphate + 2 H(+). It catalyses the reaction octanoyl-CoA + H2O = S-octanoyl-4'-phosphopantetheine + adenosine 3',5'-bisphosphate + 2 H(+). The enzyme catalyses propanoyl-CoA + H2O = propanoyl-4'-phosphopantetheine + adenosine 3',5'-bisphosphate + 2 H(+). The catalysed reaction is malonyl-CoA + H2O = malonyl-4'-phosphopantetheine + adenosine 3',5'-bisphosphate + 2 H(+). It carries out the reaction succinyl-CoA + H2O = succinyl-4'-phosphopantetheine + adenosine 3',5'-bisphosphate + 2 H(+). It catalyses the reaction a 5'-end CoA-ribonucleoside in mRNA + H2O = a 5'-end phospho-adenosine-phospho-ribonucleoside in mRNA + (R)-4'-phosphopantetheine + 2 H(+). Acyl-CoA diphosphatase that mediates the hydrolysis of a wide range of CoA and CoA esters yielding 3',5'-ADP and the corresponding 4'-phosphopantetheine derivative as products. Hydrolyzes short- and medium-chain acyl-CoAs, exhibiting the highest activity toward free CoA, hexanoyl-CoA, and octanoyl-CoA and the lowest activity against acetyl-CoA. Exhibits decapping activity towards dpCoA-capped RNAs in vitro. This is Mitochondrial coenzyme A diphosphatase NUDT8 (NUDT8) from Homo sapiens (Human).